We begin with the raw amino-acid sequence, 449 residues long: C4-dicarboxylate transport protein (449 aa).

8 helical membrane passes run 18–38, 61–81, 93–113, 159–179, 202–222, 244–264, 311–331, and 369–389; these read PFYLQLYFWVIIAIILGALLG, MIISPVIFLTIVTGIASVAHV, VYFLFFSTLALLLGLVVAHVV, FVGDNILQVLFVAVLFGIALA, LVQMLMKMAPIGAFGAIAFTI, SLLFVLVILGAVSWLCGFSIL, GYSFNLDGTNIYMTLAALFIA, and AATLAVVPEVPIAGMALILGV.

It belongs to the dicarboxylate/amino acid:cation symporter (DAACS) (TC 2.A.23) family.

The protein localises to the cell inner membrane. In terms of biological role, responsible for the transport of dicarboxylates such as succinate, fumarate, and malate from the periplasm across the membrane. This chain is C4-dicarboxylate transport protein, found in Xylella fastidiosa (strain M12).